The sequence spans 270 residues: MSGQQSSPVYKIALGIEYDGSKYYGWQRQNEVRSVQEKLEKALSQVANEPINVFCAGRTDAGVHGTGQVVHFETTALRKDVAWTLGVNANLPGDIAVRWVKAVADDFHARFSATARRYRYIIYNHRLRPAVLAKGVTHYYKPLDAERMHRAAQCLIGENDFTSFRAVQCQSRTPWRNVMHISVTRHGPYVVVDIKANAFVHHMVRNIVGSLLEVGAHNQPESWIAELLAAKDRTLAAATAKAEGLYLVAVDYPDRFDLPKPPMGPLFLAD.

D60 acts as the Nucleophile in catalysis. Y118 provides a ligand contact to substrate.

This sequence belongs to the tRNA pseudouridine synthase TruA family. As to quaternary structure, homodimer.

It carries out the reaction uridine(38/39/40) in tRNA = pseudouridine(38/39/40) in tRNA. Functionally, formation of pseudouridine at positions 38, 39 and 40 in the anticodon stem and loop of transfer RNAs. This Salmonella arizonae (strain ATCC BAA-731 / CDC346-86 / RSK2980) protein is tRNA pseudouridine synthase A.